A 160-amino-acid polypeptide reads, in one-letter code: Protein FrzA (160 aa).

The CheW-like domain occupies 14–155 (EQEFFCFRVG…FSKLLQTARQ (142 aa)).

Necessary for proper aggregation of cells to form fruiting bodies. FRZ genes define a system of signal transduction analogous to the enterobacterial chemotaxis systems. The chain is Protein FrzA (frzA) from Myxococcus xanthus.